Consider the following 171-residue polypeptide: uncharacterized protein (171 aa).

Residues 1 to 20 form the signal peptide; the sequence is MRRVLFSCFCGLLWSSSGWA. Cys40 and Cys80 are oxidised to a cystine.

The protein belongs to the fimbrial protein family.

The protein resides in the fimbrium. Its function is as follows. Part of the sfmACDHF fimbrial operon. Could contribute to adhesion to various surfaces in specific environmental niches. Increases adhesion to eukaryotic T24 bladder epithelial cells in the absence of fim genes. This is an uncharacterized protein from Escherichia coli (strain K12).